We begin with the raw amino-acid sequence, 207 residues long: Putative threonylcarbamoyl-AMP synthase (207 aa).

Positions 15-199 constitute a YrdC-like domain; that stretch reads EEERKKVLEF…KIISIREGVI (185 aa).

Belongs to the SUA5 family.

It is found in the cytoplasm. The catalysed reaction is L-threonine + hydrogencarbonate + ATP = L-threonylcarbamoyladenylate + diphosphate + H2O. Functionally, required for the formation of a threonylcarbamoyl group on adenosine at position 37 (t(6)A37) in tRNAs that read codons beginning with adenine. Catalyzes the conversion of L-threonine, HCO(3)(-)/CO(2) and ATP to give threonylcarbamoyl-AMP (TC-AMP) as the acyladenylate intermediate, with the release of diphosphate. In Methanocaldococcus jannaschii (strain ATCC 43067 / DSM 2661 / JAL-1 / JCM 10045 / NBRC 100440) (Methanococcus jannaschii), this protein is Putative threonylcarbamoyl-AMP synthase.